The sequence spans 364 residues: D-alanine--D-alanine ligase A (364 aa).

The ATP-grasp domain occupies 145–348 (KRLLRDAGLN…YTDLISRLIE (204 aa)). Residue 175–230 (ESRLGLPLFVKPANQGSSVGVSKVANEAQYQQAVALAFEFDHKVVVEQGIKGREIE) participates in ATP binding. Mg(2+) is bound by residues Asp-302, Glu-315, and Asn-317.

Belongs to the D-alanine--D-alanine ligase family. Mg(2+) serves as cofactor. Requires Mn(2+) as cofactor.

It is found in the cytoplasm. It carries out the reaction 2 D-alanine + ATP = D-alanyl-D-alanine + ADP + phosphate + H(+). Its pathway is cell wall biogenesis; peptidoglycan biosynthesis. Cell wall formation. The polypeptide is D-alanine--D-alanine ligase A (ddlA) (Salmonella typhi).